Consider the following 106-residue polypeptide: N(2)-fixation sustaining protein CowN (106 aa).

It belongs to the CowN family.

In terms of biological role, is required to sustain N(2)-dependent growth in the presence of low levels of carbon monoxide (CO). Probably acts by protecting the N(2) fixation ability of the nitrogenase complex, which is inactivated in the presence of CO. This chain is N(2)-fixation sustaining protein CowN, found in Denitrovibrio acetiphilus (strain DSM 12809 / NBRC 114555 / N2460).